We begin with the raw amino-acid sequence, 425 residues long: Serine--tRNA ligase (425 aa).

T231–E233 is a binding site for L-serine. R262 to E264 lines the ATP pocket. L-serine is bound at residue E285. E349–S352 serves as a coordination point for ATP. S385 contributes to the L-serine binding site.

Belongs to the class-II aminoacyl-tRNA synthetase family. Type-1 seryl-tRNA synthetase subfamily. Homodimer. The tRNA molecule binds across the dimer.

The protein resides in the cytoplasm. The enzyme catalyses tRNA(Ser) + L-serine + ATP = L-seryl-tRNA(Ser) + AMP + diphosphate + H(+). It carries out the reaction tRNA(Sec) + L-serine + ATP = L-seryl-tRNA(Sec) + AMP + diphosphate + H(+). The protein operates within aminoacyl-tRNA biosynthesis; selenocysteinyl-tRNA(Sec) biosynthesis; L-seryl-tRNA(Sec) from L-serine and tRNA(Sec): step 1/1. Catalyzes the attachment of serine to tRNA(Ser). Is also able to aminoacylate tRNA(Sec) with serine, to form the misacylated tRNA L-seryl-tRNA(Sec), which will be further converted into selenocysteinyl-tRNA(Sec). This chain is Serine--tRNA ligase, found in Bartonella bacilliformis (strain ATCC 35685 / KC583 / Herrer 020/F12,63).